The following is a 426-amino-acid chain: MKHLTEMVRQHKEGKTNGIYAVCSAHPLVLEAAIRYASANQTPLLIEATSNQVDQFGGYTGMTPADFRGFVCQLADSLNFPQDALILGGDHLGPNRWQNLPAAQAMANADDLIKSYVAAGFKKIHLDCSMSCQDDPIPLTDDIVAERAARLAKVAEETCREHFGAADLEYVIGTEVPVPGGAHETLSELAVTTPDAARATLEAHRHAFEKQGLSAIWPRIIALVVQPGVEFDHTNVIDYQPAKATALSQMVENYETLIFEAHSTDYQTPQSLRQLVIDHFAILKVGPALTFALREALFSLAAIEEELVPAKACSGLRQVLENVMLDRPEYWQSHYHGDGNARRLARGYSYSDRVRYYWPDSQIDDAFAHLVRNLADSPIPLPLISQYLPLQYVKVRSGELQPTPRELIINHIQDILAQYHTACEGQ.

The protein belongs to the GatZ/KbaZ family. KbaZ subfamily. In terms of assembly, forms a complex with KbaY.

It functions in the pathway carbohydrate metabolism; D-tagatose 6-phosphate degradation; D-glyceraldehyde 3-phosphate and glycerone phosphate from D-tagatose 6-phosphate: step 2/2. Functionally, component of the tagatose-1,6-bisphosphate aldolase KbaYZ that is required for full activity and stability of the Y subunit. Could have a chaperone-like function for the proper and stable folding of KbaY. When expressed alone, KbaZ does not show any aldolase activity. This chain is D-tagatose-1,6-bisphosphate aldolase subunit KbaZ, found in Escherichia coli O7:K1 (strain IAI39 / ExPEC).